Consider the following 1055-residue polypeptide: Vacuolar protein sorting-associated protein 54 (1055 aa).

The stretch at 363 to 383 (TKKIIEVHQKYEQKKHLLAKL) forms a coiled coil. A disordered region spans residues 774-794 (IDDGPTKKPFKRTGSSATIDS).

The protein belongs to the VPS54 family. Component of the Golgi-associated retrograde protein (GARP) complex, also called VFT (VPS fifty-three) complex, composed of VPS51, VPS52, VPS53 and VPS54.

It localises to the golgi apparatus. The protein localises to the trans-Golgi network. In terms of biological role, acts as a component of the GARP complex that is involved in retrograde transport from early and late endosomes to the trans-Golgi network (TGN). The GARP complex facilitates tethering as well as SNARE complex assembly at the Golgi. In Caenorhabditis briggsae, this protein is Vacuolar protein sorting-associated protein 54 (vps-54).